The sequence spans 472 residues: Aspartyl/glutamyl-tRNA(Asn/Gln) amidotransferase subunit B (472 aa).

Belongs to the GatB/GatE family. GatB subfamily. In terms of assembly, heterotrimer of A, B and C subunits.

The enzyme catalyses L-glutamyl-tRNA(Gln) + L-glutamine + ATP + H2O = L-glutaminyl-tRNA(Gln) + L-glutamate + ADP + phosphate + H(+). It catalyses the reaction L-aspartyl-tRNA(Asn) + L-glutamine + ATP + H2O = L-asparaginyl-tRNA(Asn) + L-glutamate + ADP + phosphate + 2 H(+). Its function is as follows. Allows the formation of correctly charged Asn-tRNA(Asn) or Gln-tRNA(Gln) through the transamidation of misacylated Asp-tRNA(Asn) or Glu-tRNA(Gln) in organisms which lack either or both of asparaginyl-tRNA or glutaminyl-tRNA synthetases. The reaction takes place in the presence of glutamine and ATP through an activated phospho-Asp-tRNA(Asn) or phospho-Glu-tRNA(Gln). The polypeptide is Aspartyl/glutamyl-tRNA(Asn/Gln) amidotransferase subunit B (Elusimicrobium minutum (strain Pei191)).